The following is a 311-amino-acid chain: Syndecan-1 (311 aa).

The signal sequence occupies residues 1-22; the sequence is MRRAALWLWLCALALRLQPALL. The Extracellular portion of the chain corresponds to 23-255; the sequence is HSVAVNMPPE…GLLDRKEVLG (233 aa). 2 disordered regions span residues 31–85 and 141–244; these read PEDQ…PDAI and TMAP…TGAS. The segment covering 32–42 has biased composition (acidic residues); the sequence is EDQDGSGDDSD. An O-linked (Xyl...) (chondroitin sulfate) serine glycan is attached at Ser-37. A glycan (N-linked (GlcNAc...) asparagine) is linked at Asn-43. Ser-45 and Ser-47 each carry an O-linked (Xyl...) (heparan sulfate) serine glycan. Residues 71–84 are compositionally biased toward low complexity; that stretch reads TTTATAPEPTSPDA. 2 stretches are compositionally biased toward basic and acidic residues: residues 151 to 162 and 169 to 180; these read PHRDVQPDHHET and GRMEPHRPHVEE. O-linked (Xyl...) (chondroitin sulfate) serine glycans are attached at residues Ser-204 and Ser-214. The span at 215-226 shows a compositional bias: low complexity; sequence GENAAGAAGEPG. Residues 256–276 form a helical membrane-spanning segment; sequence GVIAGGLVGLIFAVCLVGFML. The Cytoplasmic segment spans residues 277-311; that stretch reads YRMKKKDEGSYSLEEPKQANGGAYQKPTKQEEFYA. The disordered stretch occupies residues 285 to 311; that stretch reads GSYSLEEPKQANGGAYQKPTKQEEFYA. Ser-286 is subject to Phosphoserine.

This sequence belongs to the syndecan proteoglycan family. In terms of assembly, interacts with CDCP1. Interacts (via C-terminus) with TIAM1 (via PDZ domain). Interacts with MDK. Post-translationally, shedding is enhanced by a number of factors such as heparanase, thrombin or EGF. Also by stress and wound healing. PMA-mediated shedding is inhibited by TIMP3.

The protein resides in the membrane. It localises to the secreted. The protein localises to the extracellular exosome. Cell surface proteoglycan that contains both heparan sulfate and chondroitin sulfate and that links the cytoskeleton to the interstitial matrix. Regulates exosome biogenesis in concert with SDCBP and PDCD6IP. Able to induce its own expression in dental mesenchymal cells and also in the neighboring dental epithelial cells via an MSX1-mediated pathway. This is Syndecan-1 from Bos taurus (Bovine).